The sequence spans 289 residues: Protein charybde (289 aa).

The tract at residues T119–T142 is disordered.

It belongs to the DDIT4 family.

It localises to the cytoplasm. Inhibits cell growth by regulating the Tor pathway upstream of the Tsc1-Tsc2 complex and downstream of Akt1. Acts as a cell death activator during head development. The sequence is that of Protein charybde (chrb) from Drosophila pseudoobscura pseudoobscura (Fruit fly).